The following is a 2599-amino-acid chain: Protein DOP1 homolog (2599 aa).

2 disordered regions span residues glutamate 532–arginine 571 and alanine 595–glutamate 701. Polar residues-rich tracts occupy residues serine 534–serine 549, alanine 595–serine 604, and alanine 625–leucine 636. Serine 753 is modified (phosphoserine). The span at proline 1240–leucine 1251 shows a compositional bias: basic and acidic residues. Disordered regions lie at residues proline 1240 to alanine 1316 and threonine 1347 to aspartate 1368. Over residues glutamine 1264–glutamine 1282 the composition is skewed to polar residues. The span at serine 1297 to serine 1309 shows a compositional bias: basic and acidic residues. The residue at position 1355 (threonine 1355) is a Phosphothreonine. Phosphoserine occurs at positions 1360, 1363, and 1371. The tract at residues cysteine 1409–asparagine 1442 is disordered. Over residues isoleucine 1410–histidine 1423 the composition is skewed to polar residues. Serine 2525 is subject to Phosphoserine.

The protein belongs to the DOP1 family.

It is found in the golgi apparatus membrane. Its function is as follows. May be involved in protein traffic between late Golgi and early endosomes. The polypeptide is Protein DOP1 homolog (Drosophila melanogaster (Fruit fly)).